Here is a 352-residue protein sequence, read N- to C-terminus: Holliday junction branch migration complex subunit RuvB (352 aa).

Residues 13–201 (IPRSRKELRL…FGLCHKIEFY (189 aa)) are large ATPase domain (RuvB-L). ATP-binding positions include L37, R41, G82, K85, T86, T87, 148-150 (EDF), R191, Y201, and R238. T86 is a binding site for Mg(2+). The small ATPAse domain (RuvB-S) stretch occupies residues 202 to 273 (SNDELKQIIF…IIEKALDSQK (72 aa)). Positions 276 to 352 (NRGLDNVDRK…KYISSNNEKY (77 aa)) are head domain (RuvB-H). The DNA site is built by R330 and R335.

It belongs to the RuvB family. As to quaternary structure, homohexamer. Forms an RuvA(8)-RuvB(12)-Holliday junction (HJ) complex. HJ DNA is sandwiched between 2 RuvA tetramers; dsDNA enters through RuvA and exits via RuvB. An RuvB hexamer assembles on each DNA strand where it exits the tetramer. Each RuvB hexamer is contacted by two RuvA subunits (via domain III) on 2 adjacent RuvB subunits; this complex drives branch migration. In the full resolvosome a probable DNA-RuvA(4)-RuvB(12)-RuvC(2) complex forms which resolves the HJ.

It localises to the cytoplasm. It catalyses the reaction ATP + H2O = ADP + phosphate + H(+). Its function is as follows. The RuvA-RuvB-RuvC complex processes Holliday junction (HJ) DNA during genetic recombination and DNA repair, while the RuvA-RuvB complex plays an important role in the rescue of blocked DNA replication forks via replication fork reversal (RFR). RuvA specifically binds to HJ cruciform DNA, conferring on it an open structure. The RuvB hexamer acts as an ATP-dependent pump, pulling dsDNA into and through the RuvAB complex. RuvB forms 2 homohexamers on either side of HJ DNA bound by 1 or 2 RuvA tetramers; 4 subunits per hexamer contact DNA at a time. Coordinated motions by a converter formed by DNA-disengaged RuvB subunits stimulates ATP hydrolysis and nucleotide exchange. Immobilization of the converter enables RuvB to convert the ATP-contained energy into a lever motion, pulling 2 nucleotides of DNA out of the RuvA tetramer per ATP hydrolyzed, thus driving DNA branch migration. The RuvB motors rotate together with the DNA substrate, which together with the progressing nucleotide cycle form the mechanistic basis for DNA recombination by continuous HJ branch migration. Branch migration allows RuvC to scan DNA until it finds its consensus sequence, where it cleaves and resolves cruciform DNA. The protein is Holliday junction branch migration complex subunit RuvB of Prochlorococcus marinus (strain MIT 9515).